Reading from the N-terminus, the 122-residue chain is MSNRTLRVNELIQRELSEILRKRYQSEATAITITELRVAPDLRDARVFVSIVGSAEEQDEKLRWLRAHAGELRYEVGRRIVLKYLPKFEYVLDHSPEKSARILQVLDEIDRQTPPRPEAEND.

This sequence belongs to the RbfA family. Monomer. Binds 30S ribosomal subunits, but not 50S ribosomal subunits or 70S ribosomes.

Its subcellular location is the cytoplasm. Functionally, one of several proteins that assist in the late maturation steps of the functional core of the 30S ribosomal subunit. Associates with free 30S ribosomal subunits (but not with 30S subunits that are part of 70S ribosomes or polysomes). Required for efficient processing of 16S rRNA. May interact with the 5'-terminal helix region of 16S rRNA. This chain is Ribosome-binding factor A, found in Opitutus terrae (strain DSM 11246 / JCM 15787 / PB90-1).